The chain runs to 328 residues: Putative UDP-N-acetylglucosamine--dolichyl-phosphate N-acetylglucosaminephosphotransferase (328 aa).

9 helical membrane-spanning segments follow: residues 1-21, 48-68, 78-98, 107-127, 129-149, 166-186, 192-212, 228-248, and 301-321; these read MLVS…VTLI, VPVL…FTFL, IENV…LGLL, ATRA…SVGH, IISI…IIIL, LNGL…YIGL, SFYA…FLIF, FIGS…ALFF, and YHIV…AVVF.

This sequence belongs to the glycosyltransferase 4 family.

It localises to the cell membrane. The enzyme catalyses a di-trans,poly-cis-dolichyl phosphate + UDP-N-acetyl-alpha-D-glucosamine = an N-acetyl-alpha-D-glucosaminyl-diphospho-di-trans,poly-cis-dolichol + UMP. Inhibited by tunicamycin. This is Putative UDP-N-acetylglucosamine--dolichyl-phosphate N-acetylglucosaminephosphotransferase (gnpTA) from Sulfolobus acidocaldarius (strain ATCC 33909 / DSM 639 / JCM 8929 / NBRC 15157 / NCIMB 11770).